Here is a 165-residue protein sequence, read N- to C-terminus: uncharacterized protein (165 aa).

This is an uncharacterized protein from Acanthamoeba polyphaga mimivirus (APMV).